Reading from the N-terminus, the 87-residue chain is Small ribosomal subunit protein bS16 (87 aa).

Belongs to the bacterial ribosomal protein bS16 family.

This chain is Small ribosomal subunit protein bS16, found in Fusobacterium nucleatum subsp. nucleatum (strain ATCC 25586 / DSM 15643 / BCRC 10681 / CIP 101130 / JCM 8532 / KCTC 2640 / LMG 13131 / VPI 4355).